The primary structure comprises 90 residues: Acylphosphatase (90 aa).

The Acylphosphatase-like domain maps to 4–90 (TVHLRITGHV…KGQYKDFRIY (87 aa)). Active-site residues include R19 and N37.

This sequence belongs to the acylphosphatase family.

It catalyses the reaction an acyl phosphate + H2O = a carboxylate + phosphate + H(+). This Caldanaerobacter subterraneus subsp. tengcongensis (strain DSM 15242 / JCM 11007 / NBRC 100824 / MB4) (Thermoanaerobacter tengcongensis) protein is Acylphosphatase (acyP).